Consider the following 173-residue polypeptide: Large ribosomal subunit protein uL10 (173 aa).

This sequence belongs to the universal ribosomal protein uL10 family. In terms of assembly, part of the ribosomal stalk of the 50S ribosomal subunit. The N-terminus interacts with L11 and the large rRNA to form the base of the stalk. The C-terminus forms an elongated spine to which L12 dimers bind in a sequential fashion forming a multimeric L10(L12)X complex.

Functionally, forms part of the ribosomal stalk, playing a central role in the interaction of the ribosome with GTP-bound translation factors. This chain is Large ribosomal subunit protein uL10, found in Nitratidesulfovibrio vulgaris (strain ATCC 29579 / DSM 644 / CCUG 34227 / NCIMB 8303 / VKM B-1760 / Hildenborough) (Desulfovibrio vulgaris).